The chain runs to 971 residues: Nitrogen regulatory protein areA (971 aa).

Disordered stretches follow at residues 39–61 (IHNA…DASA), 146–169 (HKEE…DAGS), 262–307 (QPAH…VNST), 390–416 (SASM…NVST), and 587–691 (DNNG…GNAP). Positions 42–59 (APTQRTXNSNRIPNSRDA) are enriched in polar residues. A compositionally biased stretch (basic and acidic residues) spans 146–159 (HKEEQQQRQDEADA). 2 stretches are compositionally biased toward polar residues: residues 262 to 274 (QPAH…SEFN) and 297 to 307 (FSPQVPAVNST). The span at 390 to 400 (SASMSNNNNNS) shows a compositional bias: low complexity. Polar residues-rich tracts occupy residues 597 to 606 (LERSQSQSFR) and 632 to 645 (NGFE…QSSP). Low complexity-rich tracts occupy residues 654–663 (SGFSSVAPSR) and 680–691 (AAAGNGNDGNAP). Residues 694–718 (CTNCFTQTTPLWRRNPEGQPLCNAC) form a GATA-type zinc finger. The tract at residues 742 to 918 (NRGSGTNVPV…PFGSSAGLSS (177 aa)) is disordered. The span at 744-794 (GSGTNVPVGGSSTRSKKTASTLNSRKNSTLSMSTATANSTKPNSSNPTPRV) shows a compositional bias: polar residues. Positions 796 to 826 (TPPATSQPPSSKDVDSPVSGTTSGANTAGST) are enriched in low complexity. Over residues 832-845 (GGPGPSSGAVGGKG) the composition is skewed to gly residues. Positions 863–875 (SSMSMQRPATASS) are enriched in polar residues. Positions 892 to 918 (SMDIDSPDSTSSIDGPRPFGSSAGLSS) are enriched in low complexity.

It localises to the nucleus. Functionally, major nitrogen regulatory protein. Positively acting regulatory gene of nitrogen metabolite repression. The polypeptide is Nitrogen regulatory protein areA (AREA) (Fusarium fujikuroi (Bakanae and foot rot disease fungus)).